A 344-amino-acid chain; its full sequence is Heat-inducible transcription repressor HrcA (344 aa).

It belongs to the HrcA family.

In terms of biological role, negative regulator of class I heat shock genes (grpE-dnaK-dnaJ and groELS operons). Prevents heat-shock induction of these operons. The sequence is that of Heat-inducible transcription repressor HrcA from Streptococcus agalactiae serotype III (strain NEM316).